Here is an 80-residue protein sequence, read N- to C-terminus: Bowman-Birk type proteinase inhibitor (80 aa).

Cystine bridges form between C19-C70, C20-C35, C23-C66, C25-C33, C41-C47, C44-C59, and C49-C57.

In terms of assembly, occurs as a monomer, dimer or trimer. The dimer may be the active form. Binds calcium, probably through His-3 to His-6.

In terms of biological role, protease inhibitor with activity against cysteine, aspartic and serine proteases. Highest activity against serine proteases, in particular trypsin and trypsin-like proteases. This chain is Bowman-Birk type proteinase inhibitor, found in Phaseolus acutifolius (Tepary bean).